A 131-amino-acid chain; its full sequence is Holo-[acyl-carrier-protein] synthase (131 aa).

Positions 8 and 57 each coordinate Mg(2+).

The protein belongs to the P-Pant transferase superfamily. AcpS family. It depends on Mg(2+) as a cofactor.

The protein resides in the cytoplasm. It catalyses the reaction apo-[ACP] + CoA = holo-[ACP] + adenosine 3',5'-bisphosphate + H(+). Functionally, transfers the 4'-phosphopantetheine moiety from coenzyme A to a Ser of acyl-carrier-protein. This is Holo-[acyl-carrier-protein] synthase from Desulforudis audaxviator (strain MP104C).